A 210-amino-acid polypeptide reads, in one-letter code: Uracil phosphoribosyltransferase (210 aa).

5-phospho-alpha-D-ribose 1-diphosphate is bound by residues Arg80, Arg105, and 132–140 (DPMLATGGS). Uracil-binding positions include Ile195 and 200–202 (GDA). A 5-phospho-alpha-D-ribose 1-diphosphate-binding site is contributed by Asp201.

The protein belongs to the UPRTase family. It depends on Mg(2+) as a cofactor.

It catalyses the reaction UMP + diphosphate = 5-phospho-alpha-D-ribose 1-diphosphate + uracil. The protein operates within pyrimidine metabolism; UMP biosynthesis via salvage pathway; UMP from uracil: step 1/1. Its activity is regulated as follows. Allosterically activated by GTP. Catalyzes the conversion of uracil and 5-phospho-alpha-D-ribose 1-diphosphate (PRPP) to UMP and diphosphate. The polypeptide is Uracil phosphoribosyltransferase (Caldanaerobacter subterraneus subsp. tengcongensis (strain DSM 15242 / JCM 11007 / NBRC 100824 / MB4) (Thermoanaerobacter tengcongensis)).